Here is a 114-residue protein sequence, read N- to C-terminus: T cell receptor beta variable 5-8 (114 aa).

The N-terminal stretch at 1 to 21 (MGPRLLFWALLCLLGTGPVEA) is a signal peptide. The region spanning 22 to 114 (GVTQSPTHLI…SALYLCASSL (93 aa)) is the Ig-like domain. Cys42 and Cys110 are oxidised to a cystine. A glycan (N-linked (GlcNAc...) asparagine) is linked at Asn90.

As to quaternary structure, alpha-beta TR is a heterodimer composed of an alpha and beta chain; disulfide-linked. The alpha-beta TR is associated with the transmembrane signaling CD3 coreceptor proteins to form the TR-CD3 (TcR or TCR). The assembly of alpha-beta TR heterodimers with CD3 occurs in the endoplasmic reticulum where a single alpha-beta TR heterodimer associates with one CD3D-CD3E heterodimer, one CD3G-CD3E heterodimer and one CD247 homodimer forming a stable octameric structure. CD3D-CD3E and CD3G-CD3E heterodimers preferentially associate with TR alpha and TR beta chains, respectively. The association of the CD247 homodimer is the last step of TcR assembly in the endoplasmic reticulum and is required for transport to the cell surface.

It localises to the cell membrane. Functionally, v region of the variable domain of T cell receptor (TR) beta chain that participates in the antigen recognition. Alpha-beta T cell receptors are antigen specific receptors which are essential to the immune response and are present on the cell surface of T lymphocytes. Recognize peptide-major histocompatibility (MH) (pMH) complexes that are displayed by antigen presenting cells (APC), a prerequisite for efficient T cell adaptive immunity against pathogens. Binding of alpha-beta TR to pMH complex initiates TR-CD3 clustering on the cell surface and intracellular activation of LCK that phosphorylates the ITAM motifs of CD3G, CD3D, CD3E and CD247 enabling the recruitment of ZAP70. In turn ZAP70 phosphorylates LAT, which recruits numerous signaling molecules to form the LAT signalosome. The LAT signalosome propagates signal branching to three major signaling pathways, the calcium, the mitogen-activated protein kinase (MAPK) kinase and the nuclear factor NF-kappa-B (NF-kB) pathways, leading to the mobilization of transcription factors that are critical for gene expression and essential for T cell growth and differentiation. The T cell repertoire is generated in the thymus, by V-(D)-J rearrangement. This repertoire is then shaped by intrathymic selection events to generate a peripheral T cell pool of self-MH restricted, non-autoaggressive T cells. Post-thymic interaction of alpha-beta TR with the pMH complexes shapes TR structural and functional avidity. The chain is T cell receptor beta variable 5-8 from Homo sapiens (Human).